We begin with the raw amino-acid sequence, 423 residues long: T-box transcription factor T-A (423 aa).

Positions 44–212 (LWTKFKELTN…HNPFAKAFLD (169 aa)) form a DNA-binding region, T-box. The span at 215–227 (ERSDHKEVPDHST) shows a compositional bias: basic and acidic residues. Disordered stretches follow at residues 215–234 (ERSD…QSGY) and 280–304 (AAPY…SSGS). The span at 290-304 (RSTTTNNYMDNSSGS) shows a compositional bias: polar residues.

As to quaternary structure, monomer. Binds DNA as a monomer. In terms of tissue distribution, first expressed at the dorsal side of the blastula embryo. Expressed in the germ ring, shield and chordamesoderm during gastrulation and is restricted to the notochord and tailbud during somitogenesis (at protein level).

The protein resides in the nucleus. Functionally, involved in the transcriptional regulation of genes required for mesoderm differentiation, including itself. Indispensable for the formation of the notochord and the tail structure. Functions together with tbx16/spadetail in development of trunk and tail mesoderm. Functions by itself early in development to repress medial floor plate and promote notochord fate but at later times, functions together with tbx16/spadetail to promote medial floor plate formation. Acts in a parallel pathway to, but cooperates with, non-canonical wnt-signaling during tail formation. Required for the morphogenesis of Kupffer's vesicle and regulates left-right asymmetry. This Danio rerio (Zebrafish) protein is T-box transcription factor T-A (tbxta).